The chain runs to 396 residues: MEQTWRWYGPNDPVSLDDVRQAGATGVVTALHHIPNGEVWPIEEIKARQALLAEKGLVWSVVESIPVHEEIKTHSGNYQQHIAHYQQSLRNLAACGIDTVCYNFMPILDWTRTDLEYLLPDGSKALRFDQIAFAAFDLHILQRAGAEQDYTQEEQQQAAARFAAMSEADIAKLTGNIIAGLPGAEEGYTLDQFRARLAEYDAIDKAQLRENMAVFLRAIVPVAEEVGVRLAVHPDDPPRPLLGLPRIVSTIEDMQWFKQTVDSLHNGFTMCTGSYGVREDNDLVRMIETFGDRIHFTHLRATCREDNPKSFHEGAHLQGDVDMVAVIEAILSEEQRRHQTGDTRPIPMRPDHGHQMLDDLKKKTNPGYSAIGRLKGLAELRGVELALKRRFFPELP.

This sequence belongs to the mannonate dehydratase family. Fe(2+) serves as cofactor. Requires Mn(2+) as cofactor.

The catalysed reaction is D-mannonate = 2-dehydro-3-deoxy-D-gluconate + H2O. It participates in carbohydrate metabolism; pentose and glucuronate interconversion. Catalyzes the dehydration of D-mannonate. In Serratia proteamaculans (strain 568), this protein is Mannonate dehydratase.